Here is a 783-residue protein sequence, read N- to C-terminus: Probable alpha,alpha-trehalose-phosphate synthase [UDP-forming] 3 (783 aa).

The tract at residues 11 to 456 (QTLLVVANRL…GFDFLSELND (446 aa)) is glycosyltransferase.

It in the N-terminal section; belongs to the glycosyltransferase 20 family. This sequence in the C-terminal section; belongs to the trehalose phosphatase family.

The catalysed reaction is D-glucose 6-phosphate + UDP-alpha-D-glucose = alpha,alpha-trehalose 6-phosphate + UDP + H(+). The chain is Probable alpha,alpha-trehalose-phosphate synthase [UDP-forming] 3 (TPS3) from Arabidopsis thaliana (Mouse-ear cress).